A 197-amino-acid polypeptide reads, in one-letter code: Guanylate kinase (197 aa).

A Guanylate kinase-like domain is found at 6 to 191; that stretch reads SKLIILSGPS…CVAQIEKIIS (186 aa). Position 13–20 (13–20) interacts with ATP; that stretch reads GPSGVGKG.

This sequence belongs to the guanylate kinase family.

The protein resides in the cytoplasm. It catalyses the reaction GMP + ATP = GDP + ADP. Its function is as follows. Essential for recycling GMP and indirectly, cGMP. The protein is Guanylate kinase of Mesomycoplasma hyopneumoniae (strain 232) (Mycoplasma hyopneumoniae).